Consider the following 699-residue polypeptide: 1,4-alpha-glucan-branching enzyme (699 aa).

Residues 59–60 (NE) and 88–90 (WAP) contribute to the substrate site. A (1,4-alpha-D-glucosyl)n-binding site is contributed by Trp-104. Residue 115 to 118 (DYGK) coordinates substrate. Lys-140 contacts (1,4-alpha-D-glucosyl)n. At Tyr-170 the chain carries Phosphotyrosine. Position 330–333 (330–333 (EVLR)) interacts with substrate. Asp-354 functions as the Nucleophile in the catalytic mechanism. Glu-409 (proton donor) is an active-site residue.

Belongs to the glycosyl hydrolase 13 family. GlgB subfamily. Monomer.

It carries out the reaction Transfers a segment of a (1-&gt;4)-alpha-D-glucan chain to a primary hydroxy group in a similar glucan chain.. Its pathway is glycan biosynthesis; glycogen biosynthesis. Glycogen-branching enzyme participates in the glycogen biosynthetic process along with glycogenin and glycogen synthase. Generates alpha-1,6-glucosidic branches from alpha-1,4-linked glucose chains, to increase solubility of the glycogen polymer. The sequence is that of 1,4-alpha-glucan-branching enzyme (GBE1) from Felis catus (Cat).